Reading from the N-terminus, the 75-residue chain is Transcription attenuation protein MtrB (75 aa).

This sequence belongs to the MtrB family. As to quaternary structure, oligomer of 11 identical subunits arranged in doughnut-like structure.

Its function is as follows. Required for transcription attenuation control in the trp operon. This trans-acting factor binds to trinucleotide repeats (GAG or UAG) located in the trp leader transcript causing transcription termination. Binds the leader RNA only in presence of L-tryptophan. The protein is Transcription attenuation protein MtrB (mtrB) of Bacillus subtilis (strain 168).